The sequence spans 206 residues: Small ribosomal subunit protein uS4 (206 aa).

The interval 18 to 44 is disordered; the sequence is NIWGRPKSPVNRREYGPGQHGQRRKGK. Residues 94 to 157 enclose the S4 RNA-binding domain; sequence RRLDAVVYRA…KQLAVVLEAV (64 aa).

It belongs to the universal ribosomal protein uS4 family. As to quaternary structure, part of the 30S ribosomal subunit. Contacts protein S5. The interaction surface between S4 and S5 is involved in control of translational fidelity.

One of the primary rRNA binding proteins, it binds directly to 16S rRNA where it nucleates assembly of the body of the 30S subunit. Its function is as follows. With S5 and S12 plays an important role in translational accuracy. The protein is Small ribosomal subunit protein uS4 of Jannaschia sp. (strain CCS1).